Here is a 310-residue protein sequence, read N- to C-terminus: uncharacterized protein (310 aa).

The interval 1-70 is disordered; sequence MAGNSQRRGA…ARGRTDETET (70 aa). Over residues 49–62 the composition is skewed to basic residues; it reads AAKRAKAQQRRPAR. The S-adenosyl-L-methionine site is built by glycine 262, valine 282, and leucine 291.

Belongs to the class IV-like SAM-binding methyltransferase superfamily. RNA methyltransferase TrmH family.

This is an uncharacterized protein from Mycobacterium marinum (strain ATCC BAA-535 / M).